The primary structure comprises 162 residues: NADH-quinone oxidoreductase subunit I (162 aa).

4Fe-4S ferredoxin-type domains lie at 52–82 and 93–122; these read LRRYPNGEERCIACKLCEAVCPAQAITIEAG and TRYDIDMVKCIYCGMCQEACPVDAIVEGPN. [4Fe-4S] cluster is bound by residues Cys62, Cys65, Cys68, Cys72, Cys102, Cys105, Cys108, and Cys112.

It belongs to the complex I 23 kDa subunit family. NDH-1 is composed of 14 different subunits. Subunits NuoA, H, J, K, L, M, N constitute the membrane sector of the complex. [4Fe-4S] cluster serves as cofactor.

Its subcellular location is the cell inner membrane. The enzyme catalyses a quinone + NADH + 5 H(+)(in) = a quinol + NAD(+) + 4 H(+)(out). Functionally, NDH-1 shuttles electrons from NADH, via FMN and iron-sulfur (Fe-S) centers, to quinones in the respiratory chain. The immediate electron acceptor for the enzyme in this species is believed to be ubiquinone. Couples the redox reaction to proton translocation (for every two electrons transferred, four hydrogen ions are translocated across the cytoplasmic membrane), and thus conserves the redox energy in a proton gradient. The polypeptide is NADH-quinone oxidoreductase subunit I (Methylobacterium sp. (strain 4-46)).